We begin with the raw amino-acid sequence, 251 residues long: 5'-nucleotidase SurE (251 aa).

A divalent metal cation contacts are provided by aspartate 8, aspartate 9, serine 39, and asparagine 91.

The protein belongs to the SurE nucleotidase family. A divalent metal cation is required as a cofactor.

Its subcellular location is the cytoplasm. It carries out the reaction a ribonucleoside 5'-phosphate + H2O = a ribonucleoside + phosphate. Its function is as follows. Nucleotidase that shows phosphatase activity on nucleoside 5'-monophosphates. The protein is 5'-nucleotidase SurE of Methylococcus capsulatus (strain ATCC 33009 / NCIMB 11132 / Bath).